A 245-amino-acid chain; its full sequence is Ribosomal RNA small subunit methyltransferase G (245 aa).

S-adenosyl-L-methionine contacts are provided by residues glycine 80, phenylalanine 85, 103–105, 131–132, and arginine 150; these read DAT and AE.

The protein belongs to the methyltransferase superfamily. RNA methyltransferase RsmG family.

The protein resides in the cytoplasm. In terms of biological role, specifically methylates the N7 position of a guanine in 16S rRNA. This is Ribosomal RNA small subunit methyltransferase G from Deinococcus geothermalis (strain DSM 11300 / CIP 105573 / AG-3a).